We begin with the raw amino-acid sequence, 72 residues long: UPF0337 protein bsl2407 (72 aa).

A disordered region spans residues 1–55 (MGSTTDKIKGNANEAIGKAKQGIGEATGSDRLKGEGVVQEVKGKGQQAMGDAKDA). Positions 35–47 (EGVVQEVKGKGQQ) are enriched in low complexity.

Belongs to the UPF0337 (CsbD) family.

This Bradyrhizobium diazoefficiens (strain JCM 10833 / BCRC 13528 / IAM 13628 / NBRC 14792 / USDA 110) protein is UPF0337 protein bsl2407.